A 4652-amino-acid polypeptide reads, in one-letter code: Low-density lipoprotein receptor-related protein 2 (4652 aa).

The N-terminal stretch at 1 to 25 (MERWAAAAACTLLLAFAACLAPASG) is a signal peptide. Topologically, residues 26-4422 (RECLGNEFRC…SKGISPGTTV (4397 aa)) are extracellular. 7 LDL-receptor class A domains span residues 27–63 (ECLGNEFRCSNGHCITESWRCDGTRDCLDGSDEIGCP), 66–104 (TCGSTQFHCENEDVCIPLYWVCDGEEDCSNGADEHQRCP), 108–144 (TCSSHHFTCTNGECIPVEYRCDHSTDCLDGTDEINCR), 142–181 (NCRYPVCQQQTCHNGACYNTSQRCDGEIDCRDASDELNCT), 183–219 (RCLRNEFQCGSGECIPRDYVCDHDPDCSDSSDEHSCS), 223–259 (PCKGNEFACSNGFCINQNWVCDGMADCLDNSDEDGCE), and 267–308 (ECYP…RVCD). 21 cysteine pairs are disulfide-bonded: cysteine 28-cysteine 40, cysteine 35-cysteine 53, cysteine 47-cysteine 62, cysteine 67-cysteine 80, cysteine 74-cysteine 93, cysteine 87-cysteine 103, cysteine 109-cysteine 121, cysteine 116-cysteine 134, cysteine 128-cysteine 143, cysteine 143-cysteine 158, cysteine 153-cysteine 171, cysteine 165-cysteine 180, cysteine 184-cysteine 196, cysteine 191-cysteine 209, cysteine 203-cysteine 218, cysteine 224-cysteine 236, cysteine 231-cysteine 249, cysteine 243-cysteine 258, cysteine 268-cysteine 281, cysteine 275-cysteine 294, and cysteine 288-cysteine 307. Residues asparagine 160 and asparagine 179 are each glycosylated (N-linked (GlcNAc...) asparagine). Asparagine 341 is a glycosylation site (N-linked (GlcNAc...) asparagine). Residues 348-386 (DFNDCQIWGICDHFCEDRIGHHQCFCAEGYVLEHEQHCR) enclose the EGF-like 1; calcium-binding domain. Intrachain disulfides connect cysteine 352-cysteine 362, cysteine 358-cysteine 371, and cysteine 373-cysteine 385. Residue asparagine 388 is glycosylated (N-linked (GlcNAc...) asparagine). 8 LDL-receptor class B repeats span residues 436–478 (SKVF…DWIN), 479–521 (NKLY…DPTV), 522–568 (GYLF…DLVA), 569–613 (KRVY…FEDN), 753–795 (NAIF…DWIS), 796–837 (RNLY…HPIA), 838–881 (GYIF…DWGS), and 882–925 (SRLY…FGEY). Asparagine 771 carries N-linked (GlcNAc...) asparagine glycosylation. A glycan (N-linked (GlcNAc...) asparagine) is linked at asparagine 866. Asparagine 1015 carries an N-linked (GlcNAc...) asparagine glycan. The LDL-receptor class A 8 domain occupies 1025–1061 (QCGALSFPCNNGRCVPLHYRCDGVDDCHDNSDEVQCG). 3 cysteine pairs are disulfide-bonded: cysteine 1026–cysteine 1038, cysteine 1033–cysteine 1051, and cysteine 1045–cysteine 1060. Asparagine 1064 carries N-linked (GlcNAc...) asparagine glycosylation. 7 consecutive LDL-receptor class A domains span residues 1066–1104 (SCAPSAFACGHGGGECIPSYWRCDNHNDCVDGSDEQNCS), 1110–1146 (SCRADYFTCDNHMCIPKNWLCDTDNDCGDGSDEKRCD), 1150–1186 (TCSPTQFHCPNHRCIDLAFVCDGDKDCADGSDESACV), 1188–1225 (NCTDSQFKCVGSNKCISNTYRCDGVSDCSDHSDEIDCP), 1231–1269 (MCRQDEFQCREDGICIPDSWECDGHPDCLTGSDEHSGCP), 1272–1308 (TCPXSRFLCANGNCIFRDWLCDGDNDCRDMSDEKDCP), and 1313–1351 (LCPSWQWQCPGHSICVNLSSVCDGISDCPHGTDESPLCN). 9 disulfide bridges follow: cysteine 1067–cysteine 1081, cysteine 1074–cysteine 1094, cysteine 1088–cysteine 1103, cysteine 1111–cysteine 1123, cysteine 1118–cysteine 1136, cysteine 1130–cysteine 1145, cysteine 1151–cysteine 1163, cysteine 1158–cysteine 1176, and cysteine 1170–cysteine 1185. Asparagine 1102 is a glycosylation site (N-linked (GlcNAc...) asparagine). 6 residues coordinate Ca(2+): tryptophan 1128, aspartate 1131, aspartate 1133, aspartate 1135, aspartate 1141, and glutamate 1142. An N-linked (GlcNAc...) asparagine glycan is attached at asparagine 1188. Intrachain disulfides connect cysteine 1189–cysteine 1202, cysteine 1196–cysteine 1215, cysteine 1209–cysteine 1224, cysteine 1232–cysteine 1245, cysteine 1239–cysteine 1258, cysteine 1252–cysteine 1268, cysteine 1273–cysteine 1285, cysteine 1280–cysteine 1298, cysteine 1292–cysteine 1307, cysteine 1314–cysteine 1327, cysteine 1321–cysteine 1340, and cysteine 1334–cysteine 1350. Tyrosine 1207, aspartate 1210, valine 1212, aspartate 1214, aspartate 1220, and glutamate 1221 together coordinate Ca(2+). An N-linked (GlcNAc...) asparagine glycan is attached at asparagine 1329. Residues asparagine 1385, asparagine 1452, asparagine 1498, and asparagine 1552 are each glycosylated (N-linked (GlcNAc...) asparagine). LDL-receptor class B repeat units follow at residues 1480–1522 (GRIF…DWVG), 1523–1565 (RNLY…DPRV), 1568–1611 (RVIF…DYPT), 1612–1654 (RLLY…TIFE), 1655–1696 (DSIY…VHPA), 1789–1831 (QFLY…DWLS), 1832–1881 (RNLY…DPAK), 1882–1929 (GKLY…DIQE), 1930–1971 (QKLY…YGPY), and 1972–2012 (LYYA…YRRR). Asparagine 1677 and asparagine 1809 each carry an N-linked (GlcNAc...) asparagine glycan. An N-linked (GlcNAc...) asparagine glycan is attached at asparagine 2053. 9 LDL-receptor class B repeats span residues 2105-2154 (GFVY…DWVA), 2155-2199 (GNLY…DPKN), 2200-2243 (RYLF…DHNS), 2244-2287 (GYIY…FGNS), 2429-2475 (NRIY…DWIG), 2476-2516 (RRIY…DPCQ), 2517-2560 (GYMY…DYKE), 2561-2602 (NLLY…YGQY), and 2603-2644 (IYWT…VVNN). Residues asparagine 2175 and asparagine 2222 are each glycosylated (N-linked (GlcNAc...) asparagine). Residue asparagine 2485 is glycosylated (N-linked (GlcNAc...) asparagine). 10 LDL-receptor class A domains span residues 2696–2734 (RCNSTQFTCLSGYCILESLKCNDIDECGDSSDELETLCA), 2737–2773 (TCPPTSFTCANGRCIQRHFRCDHYNDCGDNSDESGCR), 2776–2815 (SCNITTEFSCNNGKCLPLQLVCDGIDHCNDNNTSDEKNCA), 2818–2857 (TCLPDYIKCANSNVCIPRLFLCDGDNDCGDMSDENPIYCV), 2860–2897 (TCKNNEFQCTSGSCIPELWHCDGERDCDDGSDEPATCV), 2902–2941 (TCSSDEFKCDNNRCIQMEWICDGDNDCGDMSDEDGRHHCE), 2944–2986 (NCSS…QNCT), 2989–3025 (NCSGTEFRCSNGLCIPNWFRCDRRNDCGDYSDERNCK), 3028–3066 (ACDENLFTCQNGICTYKSYICDGENDCGDNSDELEHLCH), and 3071–3107 (TCPPHQFRCNNGNCIEMVKVCNHQADCSDNSDEERCG). Intrachain disulfides connect cysteine 2697/cysteine 2709, cysteine 2704/cysteine 2722, cysteine 2716/cysteine 2733, cysteine 2738/cysteine 2750, cysteine 2745/cysteine 2763, cysteine 2757/cysteine 2772, cysteine 2777/cysteine 2790, cysteine 2785/cysteine 2803, cysteine 2797/cysteine 2814, cysteine 2819/cysteine 2832, cysteine 2826/cysteine 2845, cysteine 2839/cysteine 2856, cysteine 2861/cysteine 2873, cysteine 2868/cysteine 2886, cysteine 2880/cysteine 2896, cysteine 2903/cysteine 2915, cysteine 2910/cysteine 2928, and cysteine 2922/cysteine 2940. A glycan (N-linked (GlcNAc...) asparagine) is linked at asparagine 2698. Asparagine 2778 carries an N-linked (GlcNAc...) asparagine glycan. Residues asparagine 2806 and asparagine 2807 are each glycosylated (N-linked (GlcNAc...) asparagine). Asparagine 2944 carries an N-linked (GlcNAc...) asparagine glycan. Cystine bridges form between cysteine 2945–cysteine 2962, cysteine 2952–cysteine 2975, and cysteine 2969–cysteine 2985. N-linked (GlcNAc...) asparagine glycosylation is found at asparagine 2984 and asparagine 2989. 9 disulfides stabilise this stretch: cysteine 2990-cysteine 3002, cysteine 2997-cysteine 3015, cysteine 3009-cysteine 3024, cysteine 3029-cysteine 3041, cysteine 3036-cysteine 3054, cysteine 3048-cysteine 3065, cysteine 3072-cysteine 3084, cysteine 3079-cysteine 3097, and cysteine 3091-cysteine 3106. Residue asparagine 3122 is glycosylated (N-linked (GlcNAc...) asparagine). Residues 3149–3189 (DIDECKETPSVCSQKCENLLGSYICKCAPGYTREPDGRSCR) enclose the EGF-like 2; calcium-binding domain. 3 cysteine pairs are disulfide-bonded: cysteine 3153–cysteine 3164, cysteine 3160–cysteine 3173, and cysteine 3175–cysteine 3188. N-linked (GlcNAc...) asparagine glycans are attached at residues asparagine 3208, asparagine 3254, asparagine 3312, and asparagine 3352. 5 LDL-receptor class B repeats span residues 3236–3278 (ERLY…DWVT), 3279–3321 (RKLY…DKPR), 3330–3373 (GYVY…DYTN), 3374–3417 (DLLY…FEDT), and 3418–3458 (IYWT…YHPY). N-linked (GlcNAc...) asparagine glycans are attached at residues asparagine 3435 and asparagine 3444. LDL-receptor class A domains are found at residues 3509–3547 (MCSSTQFLCANNEMCIPIWWKCDGQKDCLDGSDEPNTCP), 3550–3588 (FCRLGQFQCSDGNCTSSNFICNARQDCPDGSDEDAVLCE), 3591–3629 (RCESNQWQCANKRCIPESWQCDSLNDCGDNSDEDSSHCA), 3632–3670 (TCLPGYFKCANGHCIPQSWKCDVDNDCGDYSDEPLQECM), 3675–3713 (RCDNYTEFDCKTNYRCIPKWAVCNGFDDCRDNSDEQNCE), 3716–3753 (TCKPSGEFRCTNHHCIPLRWRCDGHNDCGDNSDEENCV), 3756–3792 (QCSESEFRCDDQTCIPSRWICDQNNDCGDNSDERDCE), 3795–3831 (TCHPGYFQCSSGHCIPDQMRCDGFADCLDASDEATCP), and 3839–3877 (YCPATLFECKNHVCVQPSWKCDGDNDCGDGSDEELHLCL). 27 cysteine pairs are disulfide-bonded: cysteine 3510–cysteine 3523, cysteine 3517–cysteine 3536, cysteine 3530–cysteine 3546, cysteine 3551–cysteine 3563, cysteine 3558–cysteine 3576, cysteine 3570–cysteine 3587, cysteine 3592–cysteine 3604, cysteine 3599–cysteine 3617, cysteine 3611–cysteine 3628, cysteine 3633–cysteine 3645, cysteine 3640–cysteine 3658, cysteine 3652–cysteine 3669, cysteine 3676–cysteine 3690, cysteine 3684–cysteine 3703, cysteine 3697–cysteine 3712, cysteine 3717–cysteine 3730, cysteine 3725–cysteine 3743, cysteine 3737–cysteine 3752, cysteine 3757–cysteine 3769, cysteine 3764–cysteine 3782, cysteine 3776–cysteine 3791, cysteine 3796–cysteine 3808, cysteine 3803–cysteine 3821, cysteine 3815–cysteine 3830, cysteine 3840–cysteine 3852, cysteine 3847–cysteine 3865, and cysteine 3859–cysteine 3876. N-linked (GlcNAc...) asparagine glycosylation is present at asparagine 3562. An N-linked (GlcNAc...) asparagine glycan is attached at asparagine 3678. An N-linked (GlcNAc...) asparagine glycan is attached at asparagine 3878. LDL-receptor class A domains follow at residues 3880–3919 (TCDLTNRFRCDNNRCIYRHELCNHEDDCGDGSDEKKENCL) and 3925–3961 (PCTEGEFKCSNGHCISQHLVCDDVDDCGDHFDETGCN). Cystine bridges form between cysteine 3881-cysteine 3894, cysteine 3889-cysteine 3907, cysteine 3901-cysteine 3918, cysteine 3926-cysteine 3938, cysteine 3933-cysteine 3951, cysteine 3945-cysteine 3960, cysteine 3968-cysteine 3977, cysteine 3973-cysteine 3987, cysteine 3989-cysteine 4003, cysteine 4009-cysteine 4019, cysteine 4015-cysteine 4028, and cysteine 4030-cysteine 4045. Positions 3964-4004 (EERSCAENLCEHNCTQLIGGGFICSCRPGFKASSLNRNSCE) constitute an EGF-like 3 domain. Residue asparagine 3976 is glycosylated (N-linked (GlcNAc...) asparagine). An EGF-like 4; calcium-binding domain is found at 4005 to 4046 (DINECEQFGVCPQNCHNTKGSYECTCAEGFRSMSEHYGERCA). The N-linked (GlcNAc...) asparagine glycan is linked to asparagine 4066. LDL-receptor class B repeat units follow at residues 4152–4194 (RHIY…NPKQ), 4195–4238 (GLMY…DYVN), and 4240–4281 (DRIY…FESQ). Asparagine 4325 carries an N-linked (GlcNAc...) asparagine glycan. In terms of domain architecture, EGF-like 5 spans 4375 to 4409 (MPPPCRCMNEGNCYFDKNNLPKCKCPSGYMGEYCE). Disulfide bonds link cysteine 4379/cysteine 4387, cysteine 4381/cysteine 4397, and cysteine 4399/cysteine 4408. A helical membrane pass occupies residues 4423 to 4443 (AVLVTLILIIIIGGLVALGFF). The Cytoplasmic segment spans residues 4444-4652 (HYRKTGSILI…ANLVREDSEA (209 aa)). The SH3-binding motif lies at 4450-4459 (SILISMPRLP). The short motif at 4453 to 4458 (ISMPRL) is the PxLPxI/L motif 1; mediates interaction with ANKRA2 element. The PxLPxI/L motif 2; mediates interaction with ANKRA2 motif lies at 4456–4461 (PRLPSL). Serine 4460 is subject to Phosphoserine. The short motif at 4518–4523 (FENPMY) is the Endocytosis signal element. Polar residues predominate over residues 4536-4553 (TTTQVSESGNVYNKNYGS). Residues 4536–4652 (TTTQVSESGN…ANLVREDSEA (117 aa)) form a disordered region. Serine 4568 bears the Phosphoserine mark. The tract at residues 4588–4601 (QNTNFENPIYAETE) is interaction with DAB2. The NPXY motif signature appears at 4594–4597 (NPIY). The SH2-binding signature appears at 4597-4600 (YAET). Positions 4610 to 4621 (VTPPPSPSPPAK) match the SH3-binding motif. Serine 4615 is subject to Phosphoserine. Over residues 4626–4636 (KGTTPAYSATE) the composition is skewed to polar residues. Threonine 4629 is modified (phosphothreonine). Serine 4650 is subject to Phosphoserine.

It belongs to the LDLR family. As to quaternary structure, binds plasminogen, extracellular matrix components, plasminogen activator-plasminogen activator inhibitor type I complex, apolipoprotein E-enriched beta-VLDL, lipoprotein lipase, lactoferrin, CLU/clusterin and calcium. Forms a multimeric complex together with LRPAP1. Interacts (via PxLPxI/L motif) with ANKRA2 (via ankyrin repeats). Interacts with LRP2BP. Interacts (via NPXY motif) with DAB2; the interaction is not affected by tyrosine phosphorylation of the NPXY motif. Interacts with MB. Interacts with BMP4. Interacts with the Sonic hedgehog protein N-product which is the active product of SHH. Interacts with CST3 in a calcium-dependent manner. Interacts with the vitamin-D binding protein GC/DBP. Interacts with sex hormone-binding protein SHBG. Interacts with angiotensin-2. Also interacts with angiotensin 1-7. Interacts with APOM. Interacts with selenoprotein SEPP1. Interacts with LEP. Interacts with ALB. Interacts with the antiapoptotic protein BIRC5/survivin. Interacts with matrix metalloproteinase MMP2 in complex with metalloproteinase inhibitor TIMP1. In neurons, forms a trimeric complex with APP and APPB1/FE65. Interacts with LDLRAP1/ARH; mediates trafficking of LRP2 to the endocytic recycling compartment. Does not interact with beta-amyloid protein 40 alone but interacts with the complex composed of beta-amyloid protein 40 and CLU/APOJ. Interacts with MDK. A fraction undergoes proteolytic cleavage of the extracellular domain at the cell membrane to generate a cytoplasmic tail fragment. This is internalized into the early endosome from where it trafficks in an LDLRAP1/ARH-dependent manner to the endocytic recycling compartment (ERC). In the ERC, it is further cleaved by gamma-secretase to release a fragment which translocates to the nucleus and mediates transcriptional repression. In terms of processing, N-glycosylation is required for ligand binding.

It localises to the apical cell membrane. It is found in the endosome lumen. Its subcellular location is the membrane. The protein resides in the clathrin-coated pit. The protein localises to the cell projection. It localises to the dendrite. It is found in the axon. Multiligand endocytic receptor. Acts together with CUBN to mediate endocytosis of high-density lipoproteins. Mediates receptor-mediated uptake of polybasic drugs such as aprotinin, aminoglycosides and polymyxin B. In the kidney, mediates the tubular uptake and clearance of leptin. Also mediates transport of leptin across the blood-brain barrier through endocytosis at the choroid plexus epithelium. Endocytosis of leptin in neuronal cells is required for hypothalamic leptin signaling and leptin-mediated regulation of feeding and body weight. Mediates endocytosis and subsequent lysosomal degradation of CST3 in kidney proximal tubule cells. Mediates renal uptake of 25-hydroxyvitamin D3 in complex with the vitamin D3 transporter GC/DBP. Mediates renal uptake of metallothionein-bound heavy metals. Together with CUBN, mediates renal reabsorption of myoglobin. Mediates renal uptake and subsequent lysosomal degradation of APOM. Plays a role in kidney selenium homeostasis by mediating renal endocytosis of selenoprotein SEPP1. Mediates renal uptake of the antiapoptotic protein BIRC5/survivin which may be important for functional integrity of the kidney. Mediates renal uptake of matrix metalloproteinase MMP2 in complex with metalloproteinase inhibitor TIMP1. Mediates endocytosis of Sonic hedgehog protein N-product (ShhN), the active product of SHH. Also mediates ShhN transcytosis. In the embryonic neuroepithelium, mediates endocytic uptake and degradation of BMP4, is required for correct SHH localization in the ventral neural tube and plays a role in patterning of the ventral telencephalon. Required at the onset of neurulation to sequester SHH on the apical surface of neuroepithelial cells of the rostral diencephalon ventral midline and to control PTCH1-dependent uptake and intracellular trafficking of SHH. During neurulation, required in neuroepithelial cells for uptake of folate bound to the folate receptor FOLR1 which is necessary for neural tube closure. In the adult brain, negatively regulates BMP signaling in the subependymal zone which enables neurogenesis to proceed. In astrocytes, mediates endocytosis of ALB which is required for the synthesis of the neurotrophic factor oleic acid. Involved in neurite branching. During optic nerve development, required for SHH-mediated migration and proliferation of oligodendrocyte precursor cells. Mediates endocytic uptake and clearance of SHH in the retinal margin which protects retinal progenitor cells from mitogenic stimuli and keeps them quiescent. Plays a role in reproductive organ development by mediating uptake in reproductive tissues of androgen and estrogen bound to the sex hormone binding protein SHBG. Mediates endocytosis of angiotensin-2. Also mediates endocytosis of angiotensis 1-7. Binds to the complex composed of beta-amyloid protein 40 and CLU/APOJ and mediates its endocytosis and lysosomal degradation. Required for embryonic heart development. Required for normal hearing, possibly through interaction with estrogen in the inner ear. This is Low-density lipoprotein receptor-related protein 2 from Sus scrofa (Pig).